The chain runs to 359 residues: MVGKIAPVAVDAMGGDHAPGAIVQGAINAARKGLPILLVGPEARLRDELARHRAGHALPIEVHHAGEVVEMDDHPGQAMRRKRDNSIRVCFELVKSGRASAMVSAGNSGAVMAGAIFVLGRPEGVERPAIISVLPALKGSSILLDMGAVVDCKPIHLVQFALMGEVYARRVVGVARPKVAILANGEEESKGTDLTRAAAAALRHAPLQFVGYCEGRDLLTGEVDVIVTDGFTGNVALKTMEGTAKVVGEYLKRALRSTAVSAIGGMLSKAALDGMKKRLDWREVGGAPLVGVNGVGFISHGRSDAIAIENAIHRARDAARAHFVDEIARAVAPSEALLEGAAGRAARPPPPRRASSHDA.

Positions 338–359 (LEGAAGRAARPPPPRRASSHDA) are disordered.

This sequence belongs to the PlsX family. As to quaternary structure, homodimer. Probably interacts with PlsY.

The protein localises to the cytoplasm. It carries out the reaction a fatty acyl-[ACP] + phosphate = an acyl phosphate + holo-[ACP]. The protein operates within lipid metabolism; phospholipid metabolism. Its function is as follows. Catalyzes the reversible formation of acyl-phosphate (acyl-PO(4)) from acyl-[acyl-carrier-protein] (acyl-ACP). This enzyme utilizes acyl-ACP as fatty acyl donor, but not acyl-CoA. The protein is Phosphate acyltransferase of Anaeromyxobacter sp. (strain Fw109-5).